Reading from the N-terminus, the 162-residue chain is Disulfide bond formation protein B (162 aa).

Residues Met-1–Ala-8 are Cytoplasmic-facing. A helical transmembrane segment spans residues Val-9–Ala-25. The Periplasmic segment spans residues Ala-26 to Leu-43. Cys-35 and Cys-38 are joined by a disulfide. The chain crosses the membrane as a helical span at residues Cys-44–Pro-60. The Cytoplasmic portion of the chain corresponds to Arg-61 to Leu-67. A helical membrane pass occupies residues Phe-68–Ala-85. Topologically, residues Tyr-86–Val-141 are periplasmic. An intrachain disulfide couples Cys-101 to Cys-128. The chain crosses the membrane as a helical span at residues Trp-142–Arg-160. Residues Ala-161 to Lys-162 are Cytoplasmic-facing.

This sequence belongs to the DsbB family.

It localises to the cell inner membrane. Its function is as follows. Required for disulfide bond formation in some periplasmic proteins. Acts by oxidizing the DsbA protein. In Neisseria meningitidis serogroup B (strain ATCC BAA-335 / MC58), this protein is Disulfide bond formation protein B.